Here is a 90-residue protein sequence, read N- to C-terminus: Protein Z600 (90 aa).

T22 and T48 each carry phosphothreonine. Positions 46-65 (PATPSSSGHGKFQTELKKRR) are disordered.

As to quaternary structure, component of the Frs-CycA-Cdk1 complex composed of Z600, CycA and Cdk1. Interacts preferentially with CycA (via C-terminus) but is also able to interact (via C-terminus) with CycE (via C-terminus).

It is found in the nucleus. In terms of biological role, cell cycle regulator that is involved in modulating and adjusting cell proliferation according to the requirements of the developmental program. Interacts with mitotic Cdk1-cyclin complexes to inhibit mitotic entry at the G2/M transition. Likely to function by binding to the hydrophobic patch of cyclins to interfere with the interaction between the complex and certain Cdk1 substrates. At the mid-blastula transition, involved in the cell cycle arrest in G2 of cycle 14 by delaying mitosis and thus reducing cell proliferation allowing cell fate specification and morphogenesis to take place. Acts downstream or in parallel to the checkpoint regulator grp which is also required for the cell cycle pause at cycle 14. During gastrulation, delays mitosis in the ventral region of the embryonic mesoderm thus allowing invagination to be completed before cell division takes place. This chain is Protein Z600, found in Drosophila melanogaster (Fruit fly).